We begin with the raw amino-acid sequence, 92 residues long: Small ribosomal subunit protein uS19 (92 aa).

This sequence belongs to the universal ribosomal protein uS19 family.

Protein S19 forms a complex with S13 that binds strongly to the 16S ribosomal RNA. This is Small ribosomal subunit protein uS19 from Beijerinckia indica subsp. indica (strain ATCC 9039 / DSM 1715 / NCIMB 8712).